Here is a 278-residue protein sequence, read N- to C-terminus: Transcription initiation factor TFIID subunit 9 (278 aa).

Residues 193–278 (TTTKTVGSSG…EEEEFEFVTN (86 aa)) are disordered. Positions 200–210 (SSGGSGGGGGQ) are enriched in gly residues. Positions 231 to 240 (AAAVGSIAGA) are enriched in low complexity. A compositionally biased stretch (gly residues) spans 241–259 (SGSGAGSASGGGGGGGSSG). The span at 269–278 (EEEEFEFVTN) shows a compositional bias: acidic residues.

Belongs to the TAF9 family. In terms of assembly, belongs to the TFIID complex which is composed of TATA binding protein (Tbp) and a number of TBP-associated factors (TAFs). Taf9 and Taf6 exist as a heterotetramer. Interacts with e(y)2.

The protein localises to the nucleus. Functionally, TFIID is a multimeric protein complex that plays a central role in mediating promoter responses to various activators and repressors. The chain is Transcription initiation factor TFIID subunit 9 from Drosophila melanogaster (Fruit fly).